Consider the following 429-residue polypeptide: Zinc finger protein 275 (429 aa).

The disordered stretch occupies residues Val31–Leu95. Residues Pro34 to Arg51 are compositionally biased toward polar residues. Phosphoserine is present on Ser76. Basic and acidic residues predominate over residues Phe79–Arg89. 2 C2H2-type zinc fingers span residues Phe101–His123 and Trp129–His151. Positions Lys149 to Arg176 are disordered. Basic and acidic residues predominate over residues Ala167–Arg176. 9 C2H2-type zinc fingers span residues Phe181–His203, Phe209–His231, Phe237–His259, Phe265–His287, Tyr293–His315, Tyr321–His343, Tyr349–His371, Tyr377–His399, and Cys405–His427.

It belongs to the krueppel C2H2-type zinc-finger protein family.

It is found in the nucleus. Functionally, may be involved in transcriptional regulation. The sequence is that of Zinc finger protein 275 (ZNF275) from Homo sapiens (Human).